Reading from the N-terminus, the 346-residue chain is NADH-ubiquinone oxidoreductase chain 2 (346 aa).

10 consecutive transmembrane segments (helical) span residues histidine 25 to serine 45, alanine 52 to phenylalanine 72, cysteine 95 to phenylalanine 115, leucine 124 to methionine 144, leucine 149 to glycine 169, isoleucine 178 to tyrosine 196, leucine 200 to leucine 219, threonine 247 to isoleucine 267, glutamate 274 to leucine 294, and alanine 326 to valine 346.

The protein belongs to the complex I subunit 2 family.

The protein localises to the mitochondrion inner membrane. It catalyses the reaction a ubiquinone + NADH + 5 H(+)(in) = a ubiquinol + NAD(+) + 4 H(+)(out). In terms of biological role, core subunit of the mitochondrial membrane respiratory chain NADH dehydrogenase (Complex I) that is believed to belong to the minimal assembly required for catalysis. Complex I functions in the transfer of electrons from NADH to the respiratory chain. The immediate electron acceptor for the enzyme is believed to be ubiquinone. This chain is NADH-ubiquinone oxidoreductase chain 2 (MT-ND2), found in Coturnix japonica (Japanese quail).